Here is a 491-residue protein sequence, read N- to C-terminus: 2,3-bisphosphoglycerate-independent phosphoglycerate mutase (491 aa).

The Mn(2+) site is built by Asp-11 and Ser-61. Residue Ser-61 is the Phosphoserine intermediate of the active site. Substrate is bound by residues His-118, 147–148 (RD), Arg-177, Arg-183, 247–250 (RNDR), and Lys-320. Residues Asp-386, His-390, Asp-427, His-428, and His-445 each coordinate Mn(2+).

Belongs to the BPG-independent phosphoglycerate mutase family. Monomer. The cofactor is Mn(2+).

It catalyses the reaction (2R)-2-phosphoglycerate = (2R)-3-phosphoglycerate. Its pathway is carbohydrate degradation; glycolysis; pyruvate from D-glyceraldehyde 3-phosphate: step 3/5. Catalyzes the interconversion of 2-phosphoglycerate and 3-phosphoglycerate. The protein is 2,3-bisphosphoglycerate-independent phosphoglycerate mutase of Helicobacter pylori (strain ATCC 700392 / 26695) (Campylobacter pylori).